The following is a 267-amino-acid chain: Outer membrane protein assembly factor BamD (267 aa).

A signal peptide spans 1–16; that stretch reads MKKILLTVSLGLALSA. A lipid anchor (N-palmitoyl cysteine) is attached at cysteine 17. Cysteine 17 carries the S-diacylglycerol cysteine lipid modification.

Belongs to the BamD family. In terms of assembly, part of the Bam complex.

The protein resides in the cell outer membrane. Its function is as follows. Part of the outer membrane protein assembly complex, which is involved in assembly and insertion of beta-barrel proteins into the outer membrane. Required for efficient transformation of Neisseria meningitidis by species-related DNA. The sequence is that of Outer membrane protein assembly factor BamD from Neisseria meningitidis serogroup A / serotype 4A (strain DSM 15465 / Z2491).